Reading from the N-terminus, the 277-residue chain is Ribosomal RNA small subunit methyltransferase A (277 aa).

Residues asparagine 26, leucine 28, glycine 53, glutamate 74, aspartate 101, and asparagine 123 each coordinate S-adenosyl-L-methionine.

The protein belongs to the class I-like SAM-binding methyltransferase superfamily. rRNA adenine N(6)-methyltransferase family. RsmA subfamily.

The protein localises to the cytoplasm. It catalyses the reaction adenosine(1518)/adenosine(1519) in 16S rRNA + 4 S-adenosyl-L-methionine = N(6)-dimethyladenosine(1518)/N(6)-dimethyladenosine(1519) in 16S rRNA + 4 S-adenosyl-L-homocysteine + 4 H(+). Functionally, specifically dimethylates two adjacent adenosines (A1518 and A1519) in the loop of a conserved hairpin near the 3'-end of 16S rRNA in the 30S particle. May play a critical role in biogenesis of 30S subunits. The sequence is that of Ribosomal RNA small subunit methyltransferase A from Opitutus terrae (strain DSM 11246 / JCM 15787 / PB90-1).